Consider the following 165-residue polypeptide: Neuritin-like protein (165 aa).

The signal sequence occupies residues 1 to 35 (MMRCCRRRCCCRQPPHALRPLLLLPLVLLPPLAAA). Residue Ala-139 is the site of GPI-anchor amidated alanine attachment. Positions 140–165 (PALPMAPAPPLLAAALALAYLLRPLA) are cleaved as a propeptide — removed in mature form.

The protein belongs to the neuritin family.

The protein resides in the cell membrane. The protein is Neuritin-like protein (NRN1L) of Homo sapiens (Human).